The chain runs to 337 residues: 3-isopropylmalate dehydrogenase (337 aa).

Substrate is bound by residues Arg-88, Arg-98, Arg-122, and Asp-212. 3 residues coordinate Mg(2+): Asp-212, Asp-236, and Asp-240. Gly-272 to Asp-284 contributes to the NAD(+) binding site.

This sequence belongs to the isocitrate and isopropylmalate dehydrogenases family. LeuB type 2 subfamily. Homodimer. Mg(2+) serves as cofactor. Requires Mn(2+) as cofactor.

The protein localises to the cytoplasm. It carries out the reaction (2R,3S)-3-isopropylmalate + NAD(+) = 4-methyl-2-oxopentanoate + CO2 + NADH. It functions in the pathway amino-acid biosynthesis; L-leucine biosynthesis; L-leucine from 3-methyl-2-oxobutanoate: step 3/4. Functionally, catalyzes the oxidation of 3-carboxy-2-hydroxy-4-methylpentanoate (3-isopropylmalate) to 3-carboxy-4-methyl-2-oxopentanoate. The product decarboxylates to 4-methyl-2 oxopentanoate. In Rhodococcus erythropolis (strain PR4 / NBRC 100887), this protein is 3-isopropylmalate dehydrogenase.